The following is a 35-amino-acid chain: Peptide ToHyp2 (35 aa).

Residues 1–29 show a composition bias toward pro residues; the sequence is LPKPPLLPPPVPGLAPGLPPLPVPDPVPH. Residues 1–35 are disordered; that stretch reads LPKPPLLPPPVPGLAPGLPPLPVPDPVPHPPKKPP. Hydroxyproline occurs at positions 5, 9, 10, 12, 16, 20, 31, and 35.

Post-translationally, O-glycosylated; contains pentose side chains at some or all of the hydroxyproline residues. Glycosylation is required for full antifungal activity.

Its function is as follows. Antimicrobial peptide. Inhibits elongation of hyphae in B.sorokiniana (IC(50)=3.8 uM) but has no effect on this process or on germination of conidia in a panel of other phytopathogenic fungi. At concentrations above 10 uM, has antibacterial activity. The protein is Peptide ToHyp2 of Taraxacum officinale (Common dandelion).